The primary structure comprises 210 residues: Oligoribonuclease (210 aa).

Residues 12 to 177 (LVWIDLEMTG…ADIVESIREL (166 aa)) enclose the Exonuclease domain. The active site involves Y134.

Belongs to the oligoribonuclease family.

The protein localises to the cytoplasm. In terms of biological role, 3'-to-5' exoribonuclease specific for small oligoribonucleotides. The polypeptide is Oligoribonuclease (Corynebacterium diphtheriae (strain ATCC 700971 / NCTC 13129 / Biotype gravis)).